The following is a 470-amino-acid chain: Neuraminidase (470 aa).

Topologically, residues 1–14 (MNPNQKIITIGSIS) are intravirion. The interval 11–32 (GSISLGLVVFNVLLHVVSIIVT) is involved in apical transport and lipid raft association. A helical transmembrane segment spans residues 15–35 (LGLVVFNVLLHVVSIIVTVLV). The tract at residues 32 to 86 (TVLVLGKGGNNGICNETVVREYNETVRIEKVTQWHNTNVVEYVPYWNGGTYMNNT) is hypervariable stalk region. The Virion surface portion of the chain corresponds to 36–470 (LGKGGNNGIC…AILPFDIDKM (435 aa)). N-linked (GlcNAc...) asparagine; by host glycans are attached at residues N46, N54, and N84. The head of neuraminidase stretch occupies residues 89–470 (ICDAKGFAPF…AILPFDIDKM (382 aa)). 8 disulfides stabilise this stretch: C90–C417, C122–C127, C182–C229, C231–C236, C277–C290, C279–C288, C316–C335, and C421–C446. Residue R116 participates in substrate binding. N144 carries an N-linked (GlcNAc...) asparagine; by host glycan. The Proton donor/acceptor role is filled by D149. A substrate-binding site is contributed by R150. Substrate is bound at residue 275–276 (EE). R291 is a binding site for substrate. Ca(2+) is bound by residues D292, G296, and D322. Residue R368 coordinates substrate. Residue N398 is glycosylated (N-linked (GlcNAc...) asparagine; by host). Y402 (nucleophile) is an active-site residue.

This sequence belongs to the glycosyl hydrolase 34 family. As to quaternary structure, homotetramer. The cofactor is Ca(2+). Post-translationally, N-glycosylated.

The protein resides in the virion membrane. It is found in the host apical cell membrane. The catalysed reaction is Hydrolysis of alpha-(2-&gt;3)-, alpha-(2-&gt;6)-, alpha-(2-&gt;8)- glycosidic linkages of terminal sialic acid residues in oligosaccharides, glycoproteins, glycolipids, colominic acid and synthetic substrates.. Its activity is regulated as follows. Inhibited by the neuraminidase inhibitors zanamivir (Relenza) and oseltamivir (Tamiflu). These drugs interfere with the release of progeny virus from infected cells and are effective against all influenza strains. Resistance to neuraminidase inhibitors is quite rare. Its function is as follows. Catalyzes the removal of terminal sialic acid residues from viral and cellular glycoconjugates. Cleaves off the terminal sialic acids on the glycosylated HA during virus budding to facilitate virus release. Additionally helps virus spread through the circulation by further removing sialic acids from the cell surface. These cleavages prevent self-aggregation and ensure the efficient spread of the progeny virus from cell to cell. Otherwise, infection would be limited to one round of replication. Described as a receptor-destroying enzyme because it cleaves a terminal sialic acid from the cellular receptors. May facilitate viral invasion of the upper airways by cleaving the sialic acid moieties on the mucin of the airway epithelial cells. Likely to plays a role in the budding process through its association with lipid rafts during intracellular transport. May additionally display a raft-association independent effect on budding. Plays a role in the determination of host range restriction on replication and virulence. Sialidase activity in late endosome/lysosome traffic seems to enhance virus replication. In Influenza A virus (strain A/Duck/Ukraine/1/1963 H3N8), this protein is Neuraminidase.